We begin with the raw amino-acid sequence, 427 residues long: Septin-8-A (427 aa).

In terms of domain architecture, Septin-type G spans 39–305; the sequence is QGFCFNILCV…ELYRRCKLEE (267 aa). Residues 49–56 are G1 motif; the sequence is GETGIGKS. Residues 49 to 56, glycine 104, 185 to 193, glycine 239, and arginine 254 contribute to the GTP site; these read GETGIGKS and KADTISKSE. The tract at residues 101 to 104 is G3 motif; sequence DTVG. The interval 184–187 is G4 motif; sequence AKAD. Residues 320–409 are a coiled coil; sequence LQETYEAKRK…KAAMEALQSQ (90 aa). Residues 376–389 show a composition bias toward basic and acidic residues; the sequence is QEESKKVEDKRRDL. The segment at 376-427 is disordered; that stretch reads QEESKKVEDKRRDLEEEMNSFNRRKAAMEALQSQSFQATSQQPLKKDKDRKN. Polar residues predominate over residues 406-418; the sequence is LQSQSFQATSQQP.

It belongs to the TRAFAC class TrmE-Era-EngA-EngB-Septin-like GTPase superfamily. Septin GTPase family.

The sequence is that of Septin-8-A (sept8-a) from Xenopus laevis (African clawed frog).